The sequence spans 211 residues: Rho-related GTP-binding protein RhoF (211 aa).

Methionine 1 bears the N-acetylmethionine mark. 26–33 serves as a coordination point for GTP; the sequence is GDGGCGKT. Positions 48–56 match the Effector region motif; sequence YAPSVFEKY. GTP contacts are provided by residues 73-77 and 131-134; these read DTAGQ and CKTD. Cysteine 208 is subject to Cysteine methyl ester. The S-geranylgeranyl cysteine moiety is linked to residue cysteine 208. A propeptide spans 209–211 (removed in mature form); sequence LLL.

Belongs to the small GTPase superfamily. Rho family.

The protein resides in the cell membrane. The protein localises to the cytoplasm. It is found in the cytoskeleton. Plasma membrane-associated small GTPase which cycles between an active GTP-bound and an inactive GDP-bound state. Causes the formation of thin, actin-rich surface projections called filopodia. Functions cooperatively with CDC42 and Rac to generate additional structures, increasing the diversity of actin-based morphology. The protein is Rho-related GTP-binding protein RhoF (RHOF) of Homo sapiens (Human).